Reading from the N-terminus, the 451-residue chain is Charged multivesicular body protein 7 (451 aa).

The tract at residues 1 to 22 (MWSPEREAQAPTGGDPAGLLPP) is disordered. A Phosphoserine modification is found at serine 232. Positions 248-312 (EQLLSRKVES…DTVQGILDRI (65 aa)) form a coiled coil. Threonine 409 is modified (phosphothreonine). Phosphoserine is present on residues serine 411, serine 432, and serine 442. Residues 431 to 451 (LSEGGLIPSSKSPKRQLEPTL) are disordered.

Belongs to the SNF7 family. As to quaternary structure, interacts with CHMP4B, but not with VPS25. Interacts with LEMD2 (via C-terminus).

The protein localises to the cytoplasm. It localises to the nucleus envelope. Functionally, ESCRT-III-like protein required to recruit the ESCRT-III complex to the nuclear envelope (NE) during late anaphase. Together with SPAST, the ESCRT-III complex promotes NE sealing and mitotic spindle disassembly during late anaphase. Recruited to the reforming NE during anaphase by LEMD2. Plays a role in the endosomal sorting pathway. The protein is Charged multivesicular body protein 7 (Chmp7) of Mus musculus (Mouse).